The primary structure comprises 277 residues: MEMO1 family protein TRQ2_0860 (277 aa).

It belongs to the MEMO1 family.

This chain is MEMO1 family protein TRQ2_0860, found in Thermotoga sp. (strain RQ2).